The chain runs to 699 residues: D-(-)-3-hydroxybutyrate oligomer hydrolase (699 aa).

The N-terminal stretch at 1 to 33 (MTAIRGGSRRAPGLALALLGGVLLGACHGDENA) is a signal peptide. Ser311 (charge relay system) is an active-site residue.

The protein belongs to the D-(-)-3-hydroxybutyrate oligomer hydrolase family.

Its subcellular location is the secreted. It catalyses the reaction (3R)-hydroxybutanoate dimer + H2O = 2 (R)-3-hydroxybutanoate + H(+). Its pathway is lipid metabolism; butanoate metabolism. Functionally, participates in the degradation of poly-3-hydroxybutyrate (PHB). It works downstream of poly(3-hydroxybutyrate) depolymerase, hydrolyzing D(-)-3-hydroxybutyrate oligomers of various length (3HB-oligomers) into 3HB-monomers. This Burkholderia pseudomallei (strain 1710b) protein is D-(-)-3-hydroxybutyrate oligomer hydrolase.